Here is a 200-residue protein sequence, read N- to C-terminus: Ras-related protein RABF2a (200 aa).

17 to 25 lines the GTP pocket; it reads GDVGAGKSS. An Effector region motif is present at residues 39-47; that stretch reads QESTIGAAF. GTP-binding positions include 65-69, 123-126, and 153-154; these read DTAGQ, NKAD, and SA. Residues C198 and C199 are each lipidated (S-geranylgeranyl cysteine).

The protein belongs to the small GTPase superfamily. Rab family. As to quaternary structure, interacts with VPS9A. Interacts with EREX (via PX domain). Binds to VPS3. In terms of tissue distribution, high in stem, root, and inflorescence.

It localises to the endosome membrane. It is found in the prevacuolar compartment membrane. Its function is as follows. Involved in the trafficking of soluble cargo proteins from the prevacuolar compartment to the central vacuole. Involved in vacuolar transport of storage proteins with EREX as effector. Regulates membrane trafficking to protein storage vacuoles (PSVs). This chain is Ras-related protein RABF2a (RABF2A), found in Arabidopsis thaliana (Mouse-ear cress).